Here is a 197-residue protein sequence, read N- to C-terminus: Lymphotoxin-alpha (197 aa).

Residues 1-26 form the signal peptide; sequence MTPPGRLYLPLLLGLLLAPPPPGAQG. The THD domain maps to 55–197; the sequence is PAAHLVGDPS…SSVFFGAFAL (143 aa). N-linked (GlcNAc...) asparagine glycosylation occurs at Asn88. An intrachain disulfide couples Cys112 to Cys148.

The protein belongs to the tumor necrosis factor family. As to quaternary structure, homotrimer, and heterotrimer of either two LTB and one LTA subunits or (less prevalent) two LTA and one LTB subunits. Interacts with TNFRSF14.

It localises to the secreted. The protein resides in the membrane. In terms of biological role, cytokine that in its homotrimeric form binds to TNFRSF1A/TNFR1, TNFRSF1B/TNFBR and TNFRSF14/HVEM. In its heterotrimeric form with LTB binds to TNFRSF3/LTBR. Lymphotoxin is produced by lymphocytes and is cytotoxic for a wide range of tumor cells in vitro and in vivo. This chain is Lymphotoxin-alpha (LTA), found in Oryctolagus cuniculus (Rabbit).